The chain runs to 309 residues: L-lactate dehydrogenase (309 aa).

NAD(+) contacts are provided by residues Val-12, Asp-33, Arg-38, Tyr-63, and 77–78 (GA). Substrate contacts are provided by residues Gln-80, Arg-86, and 118 to 121 (NPVD). NAD(+)-binding positions include 116 to 118 (ATN) and Ser-141. Residue 146-149 (DSAR) participates in substrate binding. Beta-D-fructose 1,6-bisphosphate-binding residues include Arg-151 and His-166. His-173 acts as the Proton acceptor in catalysis. A Phosphotyrosine modification is found at Tyr-219. Thr-228 provides a ligand contact to substrate.

It belongs to the LDH/MDH superfamily. LDH family. In terms of assembly, homotetramer.

It is found in the cytoplasm. The enzyme catalyses (S)-lactate + NAD(+) = pyruvate + NADH + H(+). It participates in fermentation; pyruvate fermentation to lactate; (S)-lactate from pyruvate: step 1/1. Its activity is regulated as follows. Allosterically activated by fructose 1,6-bisphosphate (FBP). Its function is as follows. Catalyzes the conversion of lactate to pyruvate. This Nitratidesulfovibrio vulgaris (strain ATCC 29579 / DSM 644 / CCUG 34227 / NCIMB 8303 / VKM B-1760 / Hildenborough) (Desulfovibrio vulgaris) protein is L-lactate dehydrogenase.